The sequence spans 167 residues: Translationally-controlled tumor protein homolog (167 aa).

The region spanning 1-167 is the TCTP domain; it reads MLIYQDVLTG…WKDGLKEIKI (167 aa).

This sequence belongs to the TCTP family.

It is found in the cytoplasm. It localises to the cytoskeleton. Its function is as follows. Involved in protein synthesis. Involved in microtubule stabilization. The protein is Translationally-controlled tumor protein homolog of Cryptococcus neoformans var. neoformans serotype D (strain B-3501A) (Filobasidiella neoformans).